The chain runs to 871 residues: Rho guanine nucleotide exchange factor 26 (871 aa).

Disordered regions lie at residues 1–49, 86–233, and 288–310; these read MDGE…LLIT, AQRR…NPSV, and PLGHAGEESEVDNDVDSPGSLRR. Ser22 carries the post-translational modification Phosphoserine. Over residues 136–156 the composition is skewed to pro residues; the sequence is PAPPPPPVLRPPRTPNAPAPC. Residues 173 to 192 are compositionally biased toward polar residues; the sequence is PTANGLAANNDSPGSGSQSG. Ser392 carries the post-translational modification Phosphoserine. The DH domain occupies 439 to 623; sequence KRQEAIFEVI…SKLVRLCNEG (185 aa). A PH domain is found at 655–782; the sequence is WLVKRGELTA…WITALGHSSG (128 aa). The region spanning 789 to 850 is the SH3 domain; it reads TSLTQVEIVR…PMECAKEITC (62 aa).

Interacts with ICAM1 and RHOG. In terms of tissue distribution, isoform 1 is broadly expressed, with highest levels in liver (at protein level). Certain mRNA species appear to be specifically expressed in prostate and liver.

Its subcellular location is the cell projection. It is found in the ruffle. In terms of biological role, activates RhoG GTPase by promoting the exchange of GDP by GTP. Required for the formation of membrane ruffles during macropinocytosis. Required for the formation of cup-like structures during trans-endothelial migration of leukocytes. In case of Salmonella enterica infection, activated by SopB, which induces cytoskeleton rearrangements and promotes bacterial entry. This is Rho guanine nucleotide exchange factor 26 (ARHGEF26) from Homo sapiens (Human).